The primary structure comprises 294 residues: Nucleotide-binding protein Swol_0262 (294 aa).

Position 15-22 (15-22 (GLSGAGKT)) interacts with ATP. Position 65–68 (65–68 (DVRG)) interacts with GTP.

It belongs to the RapZ-like family.

In terms of biological role, displays ATPase and GTPase activities. The chain is Nucleotide-binding protein Swol_0262 from Syntrophomonas wolfei subsp. wolfei (strain DSM 2245B / Goettingen).